A 1016-amino-acid chain; its full sequence is Formate dehydrogenase-O major subunit (1016 aa).

The tat-type signal signal peptide spans 1–33 (MQVSRRQFFKICAGGMAGTTAAALGFAPSVALA). Residues 43 to 106 (TRETRNTCTY…GLVDFIHSES (64 aa)) enclose the 4Fe-4S Mo/W bis-MGD-type domain. [4Fe-4S] cluster contacts are provided by cysteine 50, cysteine 53, cysteine 57, and cysteine 92. Residue selenocysteine 196 is a non-standard amino acid, selenocysteine.

It belongs to the prokaryotic molybdopterin-containing oxidoreductase family. In terms of assembly, formate dehydrogenase is a membrane-bound complex, formed by subunits alpha, beta and gamma. Mo-bis(molybdopterin guanine dinucleotide) is required as a cofactor. It depends on [4Fe-4S] cluster as a cofactor. Exported by the Tat system. The position of the signal peptide cleavage has not been experimentally proven.

Its subcellular location is the periplasm. It catalyses the reaction formate + NAD(+) = CO2 + NADH. Allows to use formate as major electron donor during aerobic respiration. Subunit alpha possibly forms the active site. This chain is Formate dehydrogenase-O major subunit (fdoG), found in Escherichia coli (strain K12).